We begin with the raw amino-acid sequence, 924 residues long: Bifunctional glutamine synthetase adenylyltransferase/adenylyl-removing enzyme (924 aa).

An adenylyl removase region spans residues 1–422 (MQTKGCRFFM…QFKKLIQEEV (422 aa)). The adenylyl transferase stretch occupies residues 424-924 (SPDETDTELE…PASTMALESE (501 aa)).

It belongs to the GlnE family. Mg(2+) is required as a cofactor.

It catalyses the reaction [glutamine synthetase]-O(4)-(5'-adenylyl)-L-tyrosine + phosphate = [glutamine synthetase]-L-tyrosine + ADP. The enzyme catalyses [glutamine synthetase]-L-tyrosine + ATP = [glutamine synthetase]-O(4)-(5'-adenylyl)-L-tyrosine + diphosphate. Involved in the regulation of glutamine synthetase GlnA, a key enzyme in the process to assimilate ammonia. When cellular nitrogen levels are high, the C-terminal adenylyl transferase (AT) inactivates GlnA by covalent transfer of an adenylyl group from ATP to specific tyrosine residue of GlnA, thus reducing its activity. Conversely, when nitrogen levels are low, the N-terminal adenylyl removase (AR) activates GlnA by removing the adenylyl group by phosphorolysis, increasing its activity. The regulatory region of GlnE binds the signal transduction protein PII (GlnB) which indicates the nitrogen status of the cell. This Acinetobacter baylyi (strain ATCC 33305 / BD413 / ADP1) protein is Bifunctional glutamine synthetase adenylyltransferase/adenylyl-removing enzyme.